The following is a 197-amino-acid chain: Protein Hikeshi (197 aa).

The required for F-X-F-G repeats-nucleoporins recognition and nuclear import stretch occupies residues 18–55; it reads VAEDKFVFDLPDYENINHVVVFMLGTIPFPEGMGGSVY. A flexible linker region involved in nuclear import of HSP70 proteins region spans residues 124 to 134; it reads QTPVGSAAVSS.

Belongs to the OPI10 family. As to quaternary structure, forms an asymmetric homodimer; required for binding and nuclear import of HSP70 proteins. Interacts with ATP-bound HSP70 proteins. Interacts with NUP62 and NUP153 (via F-X-F-G repeats). Interacts with HSPA8. In terms of tissue distribution, expressed in the central white matter of newborn and adult brain, particularly in regions where oligodendrocytes are generated.

It localises to the cytoplasm. It is found in the cytosol. Its subcellular location is the nucleus. Its function is as follows. Acts as a specific nuclear import carrier for HSP70 proteins following heat-shock stress: acts by mediating the nucleoporin-dependent translocation of ATP-bound HSP70 proteins into the nucleus. HSP70 proteins import is required to protect cells from heat shock damages. Does not translocate ADP-bound HSP70 proteins into the nucleus. May also be indirectly required for organization and/or function of the secretory apparatus in Club cells in lung. The protein is Protein Hikeshi of Mus musculus (Mouse).